Here is a 436-residue protein sequence, read N- to C-terminus: Glutamate-1-semialdehyde 2,1-aminomutase (436 aa).

An N6-(pyridoxal phosphate)lysine modification is found at lysine 270.

Belongs to the class-III pyridoxal-phosphate-dependent aminotransferase family. HemL subfamily. In terms of assembly, homodimer. Requires pyridoxal 5'-phosphate as cofactor.

It localises to the cytoplasm. The catalysed reaction is (S)-4-amino-5-oxopentanoate = 5-aminolevulinate. It functions in the pathway porphyrin-containing compound metabolism; protoporphyrin-IX biosynthesis; 5-aminolevulinate from L-glutamyl-tRNA(Glu): step 2/2. The chain is Glutamate-1-semialdehyde 2,1-aminomutase from Cutibacterium acnes (strain DSM 16379 / KPA171202) (Propionibacterium acnes).